Reading from the N-terminus, the 423-residue chain is Probable sodium/metabolite cotransporter BASS4, chloroplastic (423 aa).

A chloroplast-targeting transit peptide spans 1–55 (MVTTHHLCLLRSTVLSVPVRLRAPRAPPHPRLPTASASASSYHGPTHLRRLRPLR). Positions 23–45 (APRAPPHPRLPTASASASSYHGP) are disordered. 9 helical membrane-spanning segments follow: residues 96-116 (FLPL…TLGC), 123-140 (LSKY…LTLR), 153-173 (AGLF…QFIM), 182-202 (FITG…GVTL), 212-232 (LALA…PLSL), 244-264 (LPTE…IILG), 284-301 (GFSV…WIQV), 315-335 (AFAV…AFNA), and 389-409 (LLVI…SIIV).

This sequence belongs to the bile acid:sodium symporter (BASS) (TC 2.A.28) family.

It localises to the membrane. The protein resides in the plastid. Its subcellular location is the chloroplast envelope. Functionally, may function as sodium-coupled metabolite transporter across the chloroplast envelope. The protein is Probable sodium/metabolite cotransporter BASS4, chloroplastic (BASS4) of Oryza sativa subsp. indica (Rice).